Here is a 392-residue protein sequence, read N- to C-terminus: Tyrosine--tRNA ligase (392 aa).

The short motif at 39 to 48 (PTAPDIHIGH) is the 'HIGH' region element. Positions 223–227 (KMSKS) match the 'KMSKS' region motif. An ATP-binding site is contributed by K226. Positions 331-391 (IGIAQLLKQA…GKRRFARVVL (61 aa)) constitute an S4 RNA-binding domain.

The protein belongs to the class-I aminoacyl-tRNA synthetase family. TyrS type 2 subfamily. In terms of assembly, homodimer.

Its subcellular location is the cytoplasm. The enzyme catalyses tRNA(Tyr) + L-tyrosine + ATP = L-tyrosyl-tRNA(Tyr) + AMP + diphosphate + H(+). Catalyzes the attachment of tyrosine to tRNA(Tyr) in a two-step reaction: tyrosine is first activated by ATP to form Tyr-AMP and then transferred to the acceptor end of tRNA(Tyr). The chain is Tyrosine--tRNA ligase from Ralstonia nicotianae (strain ATCC BAA-1114 / GMI1000) (Ralstonia solanacearum).